The chain runs to 122 residues: Large ribosomal subunit protein bL20c (122 aa).

Belongs to the bacterial ribosomal protein bL20 family.

Its subcellular location is the plastid. It is found in the chloroplast. In terms of biological role, binds directly to 23S ribosomal RNA and is necessary for the in vitro assembly process of the 50S ribosomal subunit. It is not involved in the protein synthesizing functions of that subunit. This is Large ribosomal subunit protein bL20c from Dioscorea elephantipes (Elephant's foot yam).